The chain runs to 216 residues: Somatotropin (216 aa).

Residues 1-26 (MAAGPRTSALLAFALLCLPWTREVGA) form the signal peptide. A Zn(2+)-binding site is contributed by H45. C78 and C189 are oxidised to a cystine. S131 is subject to Phosphoserine. E198 contributes to the Zn(2+) binding site. An intrachain disulfide couples C206 to C214.

Belongs to the somatotropin/prolactin family.

The protein resides in the secreted. Plays an important role in growth control. Its major role in stimulating body growth is to stimulate the liver and other tissues to secrete IGF1. It stimulates both the differentiation and proliferation of myoblasts. It also stimulates amino acid uptake and protein synthesis in muscle and other tissues. This Sus scrofa (Pig) protein is Somatotropin (GH1).